We begin with the raw amino-acid sequence, 272 residues long: Acetylglutamate kinase (272 aa).

Residues 46-47 (GA), Arg-68, and Asn-166 each bind substrate.

This sequence belongs to the acetylglutamate kinase family. ArgB subfamily.

Its subcellular location is the cytoplasm. The catalysed reaction is N-acetyl-L-glutamate + ATP = N-acetyl-L-glutamyl 5-phosphate + ADP. It functions in the pathway amino-acid biosynthesis; L-arginine biosynthesis; N(2)-acetyl-L-ornithine from L-glutamate: step 2/4. Functionally, catalyzes the ATP-dependent phosphorylation of N-acetyl-L-glutamate. The polypeptide is Acetylglutamate kinase (Dehalococcoides mccartyi (strain CBDB1)).